The following is a 551-amino-acid chain: RCC1 and BTB domain-containing protein 2 (551 aa).

6 RCC1 repeats span residues 64 to 115 (NDEI…VLAT), 117 to 169 (DGEV…VLTS), 171 to 222 (GEVF…AVVD), 223 to 274 (TGEV…VLTD), 276 to 326 (GQIY…AAKS), and 328 to 382 (GGHV…TVAE). The region spanning 394–457 (ADLKFLVDGK…LYTDNISLPP (64 aa)) is the BTB domain.

It is found in the cytoplasmic vesicle. Its subcellular location is the secretory vesicle. The protein localises to the acrosome. The protein is RCC1 and BTB domain-containing protein 2 (Rcbtb2) of Rattus norvegicus (Rat).